Here is a 126-residue protein sequence, read N- to C-terminus: Small ribosomal subunit protein uS13c (126 aa).

Residues 97 to 126 (PLRGQRTRTNARTRRGGKKTVAGKKKAPRK) are disordered. Over residues 101-126 (QRTRTNARTRRGGKKTVAGKKKAPRK) the composition is skewed to basic residues.

Belongs to the universal ribosomal protein uS13 family. As to quaternary structure, part of the 30S ribosomal subunit.

It is found in the plastid. The protein resides in the chloroplast. Located at the top of the head of the 30S subunit, it contacts several helices of the 16S rRNA. The chain is Small ribosomal subunit protein uS13c from Pyropia yezoensis (Susabi-nori).